Here is a 477-residue protein sequence, read N- to C-terminus: Glycogen synthase (477 aa).

Residue Lys15 participates in ADP-alpha-D-glucose binding.

The protein belongs to the glycosyltransferase 1 family. Bacterial/plant glycogen synthase subfamily.

The enzyme catalyses [(1-&gt;4)-alpha-D-glucosyl](n) + ADP-alpha-D-glucose = [(1-&gt;4)-alpha-D-glucosyl](n+1) + ADP + H(+). The protein operates within glycan biosynthesis; glycogen biosynthesis. Functionally, synthesizes alpha-1,4-glucan chains using ADP-glucose. The polypeptide is Glycogen synthase (Salmonella choleraesuis (strain SC-B67)).